The following is a 103-amino-acid chain: Large ribosomal subunit protein bL21 (103 aa).

Belongs to the bacterial ribosomal protein bL21 family. In terms of assembly, part of the 50S ribosomal subunit. Contacts protein L20.

Functionally, this protein binds to 23S rRNA in the presence of protein L20. The protein is Large ribosomal subunit protein bL21 of Pseudomonas syringae pv. syringae (strain B728a).